We begin with the raw amino-acid sequence, 450 residues long: MTTRQPIYKSLYFQVIVAIVIGILIGHFYPDTGKALKPLGDGFIKLIKMVIAPIIFCTVVSGIAGMQSMKSVGKTGGYALLYFEIVSTIALLIGLIVVNVVQPGAGMNIDVSTLDASKIAAYVTAGQDQSIVGFILNVIPNTIVGAFANGDILQVLMFSVIFGFALHRLGAYGKPVLDFIDRFAHVMFNIINMIMKLAPLGAFGAMAFTIGAYGVSSLVQLGQLMICFYITCALFVVFVLGAIARAHGFSIFKLIRYIREELLIVLGTSSSESALPRMLIKMERLGAKKSVVGLVIPTGYSFNLDGTSIYLTMAAVFIAQATNTHMDITHQITLLLVLLLSSKGAAGVTGSGFIVLAATLSAVGHLPVAGLALILGIDRFMSEARALTNLVGNAVATVVVAKWVGELDTDKLQSELASGGSAILETRPEDDLGVAEGPTPGAAVNTTKTV.

The next 9 helical transmembrane spans lie at 10 to 30, 46 to 66, 78 to 98, 143 to 163, 190 to 210, 224 to 244, 291 to 311, 332 to 352, and 354 to 374; these read SLYF…HFYP, LIKM…IAGM, YALL…LIVV, IVGA…VIFG, IINM…AFTI, LMIC…GAIA, VVGL…SIYL, ITLL…TGSG, and IVLA…LALI. Residues 428–450 are disordered; it reads PEDDLGVAEGPTPGAAVNTTKTV.

This sequence belongs to the dicarboxylate/amino acid:cation symporter (DAACS) (TC 2.A.23) family.

The protein resides in the cell inner membrane. Responsible for the transport of dicarboxylates such as succinate, fumarate, and malate from the periplasm across the membrane. The protein is C4-dicarboxylate transport protein of Pseudomonas syringae pv. syringae (strain B728a).